A 324-amino-acid polypeptide reads, in one-letter code: Ribosomal RNA small subunit methyltransferase H (324 aa).

S-adenosyl-L-methionine contacts are provided by residues 40–42 (AGH), Asp-60, Leu-94, Asp-108, and His-115. Residues 301-324 (EEMKVNTRSRSAKLRVAERTGEDG) form a disordered region. The span at 315–324 (RVAERTGEDG) shows a compositional bias: basic and acidic residues.

The protein belongs to the methyltransferase superfamily. RsmH family.

Its subcellular location is the cytoplasm. The enzyme catalyses cytidine(1402) in 16S rRNA + S-adenosyl-L-methionine = N(4)-methylcytidine(1402) in 16S rRNA + S-adenosyl-L-homocysteine + H(+). Functionally, specifically methylates the N4 position of cytidine in position 1402 (C1402) of 16S rRNA. This chain is Ribosomal RNA small subunit methyltransferase H, found in Maridesulfovibrio salexigens (strain ATCC 14822 / DSM 2638 / NCIMB 8403 / VKM B-1763) (Desulfovibrio salexigens).